A 495-amino-acid polypeptide reads, in one-letter code: MTATAVKTDYEAIIGLETHCQLNTASKIFCNCSTDFDSPPNTNVCPVCLGYPGVLPVLNEEVLAAAVKLGLAINGQIAPYSKFDRKQYFYPDLPKNYQISQFDLPIVEHGSLEIELVDKKTKEITRKTIGITRLHMEEDAGKLVHAGSDRLAGSTHSLVDFNRTGVPLLEIVSEPDLRTGQEAAEYAQSLRQLVRYLGISDGNMQEGSLRCDVNISVRPVGQKEFGTKVEIKNMNSFSAIQKAIEYEIERQIKAIADGEEIYQETRLWEEGSQRTISMRKKEGSSDYRYFPEPDLPPLEVSEQQKQTWFATLPELPSAKRARYEQKLGLSAYDARVLTEDRDVALYFEEAVNAGADPKAVANWVTQDIAAYLNNNRLTISGLALKPSALAELIDLITKGTISGKIAKDILPELLEKGGSPQKIIEARGLVQISDPDELTAIIQAVIADHPKELEKFRSGKGNMQGFFVGQVMKRTGGKADPKLTNQLIGKLLAQA.

It belongs to the GatB/GatE family. GatB subfamily. In terms of assembly, heterotrimer of A, B and C subunits.

The catalysed reaction is L-glutamyl-tRNA(Gln) + L-glutamine + ATP + H2O = L-glutaminyl-tRNA(Gln) + L-glutamate + ADP + phosphate + H(+). The enzyme catalyses L-aspartyl-tRNA(Asn) + L-glutamine + ATP + H2O = L-asparaginyl-tRNA(Asn) + L-glutamate + ADP + phosphate + 2 H(+). Allows the formation of correctly charged Asn-tRNA(Asn) or Gln-tRNA(Gln) through the transamidation of misacylated Asp-tRNA(Asn) or Glu-tRNA(Gln) in organisms which lack either or both of asparaginyl-tRNA or glutaminyl-tRNA synthetases. The reaction takes place in the presence of glutamine and ATP through an activated phospho-Asp-tRNA(Asn) or phospho-Glu-tRNA(Gln). This chain is Aspartyl/glutamyl-tRNA(Asn/Gln) amidotransferase subunit B (gatB), found in Synechocystis sp. (strain ATCC 27184 / PCC 6803 / Kazusa).